Reading from the N-terminus, the 224-residue chain is Probable GTP-binding protein EngB (224 aa).

An EngB-type G domain is found at 27–201 (SGIEVAFAGR…DAIICQWLEQ (175 aa)). GTP-binding positions include 35–42 (GRSNAGKS), 62–66 (GRTQL), 80–83 (DLPG), 147–150 (TKCD), and 180–182 (FSS). Residues Ser-42 and Thr-64 each coordinate Mg(2+). Positions 205-224 (EYELPEEDDFDDSDEFTEEE) are disordered.

This sequence belongs to the TRAFAC class TrmE-Era-EngA-EngB-Septin-like GTPase superfamily. EngB GTPase family. Requires Mg(2+) as cofactor.

Necessary for normal cell division and for the maintenance of normal septation. The protein is Probable GTP-binding protein EngB of Colwellia psychrerythraea (strain 34H / ATCC BAA-681) (Vibrio psychroerythus).